The following is a 176-amino-acid chain: Pectinesterase inhibitor 1 (176 aa).

The N-terminal stretch at 1 to 25 (MAANLRNNAFLSSLMFLLLIGSSYA) is a signal peptide. Disulfide bonds link Cys35–Cys44 and Cys98–Cys138. A glycan (N-linked (GlcNAc...) asparagine) is linked at Asn154.

This sequence belongs to the PMEI family. As to quaternary structure, monomer and homodimer. Interacts in vitro with PPME1. In terms of tissue distribution, highest expression in flowers. Expressed exclusively at the pollen tube tip.

It localises to the secreted. It is found in the extracellular space. The protein resides in the apoplast. Inhibits pectin methylesterase (PME) from flowers and siliques. Inhibits PME from leaves. In Arabidopsis thaliana (Mouse-ear cress), this protein is Pectinesterase inhibitor 1.